A 305-amino-acid polypeptide reads, in one-letter code: Ornithine carbamoyltransferase (305 aa).

Carbamoyl phosphate-binding positions include 52-55 (STRT), glutamine 79, arginine 103, and 130-133 (HPCQ). L-ornithine is bound by residues asparagine 161, aspartate 222, and 226–227 (SM). Carbamoyl phosphate is bound by residues 262–263 (CL) and arginine 290.

The protein belongs to the aspartate/ornithine carbamoyltransferase superfamily. OTCase family.

The protein localises to the cytoplasm. The catalysed reaction is carbamoyl phosphate + L-ornithine = L-citrulline + phosphate + H(+). Its pathway is amino-acid biosynthesis; L-arginine biosynthesis; L-arginine from L-ornithine and carbamoyl phosphate: step 1/3. Its function is as follows. Reversibly catalyzes the transfer of the carbamoyl group from carbamoyl phosphate (CP) to the N(epsilon) atom of ornithine (ORN) to produce L-citrulline. The protein is Ornithine carbamoyltransferase of Pelobacter propionicus (strain DSM 2379 / NBRC 103807 / OttBd1).